The following is a 118-amino-acid chain: Large ribosomal subunit protein bL20 (118 aa).

The protein belongs to the bacterial ribosomal protein bL20 family.

Functionally, binds directly to 23S ribosomal RNA and is necessary for the in vitro assembly process of the 50S ribosomal subunit. It is not involved in the protein synthesizing functions of that subunit. This chain is Large ribosomal subunit protein bL20, found in Parvibaculum lavamentivorans (strain DS-1 / DSM 13023 / NCIMB 13966).